Here is a 434-residue protein sequence, read N- to C-terminus: 3-phosphoshikimate 1-carboxyvinyltransferase (434 aa).

3 residues coordinate 3-phosphoshikimate: lysine 15, serine 16, and arginine 20. Position 15 (lysine 15) interacts with phosphoenolpyruvate. Phosphoenolpyruvate-binding residues include glycine 96 and arginine 124. 3-phosphoshikimate contacts are provided by serine 169, glutamine 171, serine 195, aspartate 319, and lysine 346. Glutamine 171 serves as a coordination point for phosphoenolpyruvate. Aspartate 319 serves as the catalytic Proton acceptor. Positions 350 and 394 each coordinate phosphoenolpyruvate.

Belongs to the EPSP synthase family. In terms of assembly, monomer.

Its subcellular location is the cytoplasm. It catalyses the reaction 3-phosphoshikimate + phosphoenolpyruvate = 5-O-(1-carboxyvinyl)-3-phosphoshikimate + phosphate. It functions in the pathway metabolic intermediate biosynthesis; chorismate biosynthesis; chorismate from D-erythrose 4-phosphate and phosphoenolpyruvate: step 6/7. Its function is as follows. Catalyzes the transfer of the enolpyruvyl moiety of phosphoenolpyruvate (PEP) to the 5-hydroxyl of shikimate-3-phosphate (S3P) to produce enolpyruvyl shikimate-3-phosphate and inorganic phosphate. The protein is 3-phosphoshikimate 1-carboxyvinyltransferase of Prosthecochloris aestuarii (strain DSM 271 / SK 413).